Consider the following 1243-residue polypeptide: Plasma membrane calcium-transporting ATPase 2 (1243 aa).

Polar residues predominate over residues 1–13 (MGDMTNSDFYSKN). The segment at 1–24 (MGDMTNSDFYSKNQRNESSHGGEF) is disordered. The Cytoplasmic segment spans residues 1–94 (MGDMTNSDFY…NFIPPKKPKT (94 aa)). 2 positions are modified to phosphoserine: Ser18 and Ser27. A helical transmembrane segment spans residues 95–115 (FLQLVWEALQDVTLIILEIAA). The Extracellular segment spans residues 116 to 152 (IISLGLSFYHPPGESNEGCATAQGGAEDEGEAEAGWI). Residues 153 to 173 (EGAAILLSVICVVLVTAFNDW) form a helical membrane-spanning segment. Residues 174–390 (SKEKQFRGLQ…KEKSVLQGKL (217 aa)) are Cytoplasmic-facing. Residues 296–308 (EEKKDKKGVKKGD) show a composition bias toward basic and acidic residues. The interval 296–382 (EEKKDKKGVK…KKKANMHKKE (87 aa)) is disordered. Low complexity-rich tracts occupy residues 313–330 (PAAD…ANAS) and 337–356 (QDGS…GAAA). A helical membrane pass occupies residues 391–410 (TKLAVQIGKAGLVMSAITVI). Topologically, residues 411–443 (ILVLYFTVDTFVVNKKPWLTECTPVYVQYFVKF) are extracellular. Residues 444-461 (FIIGVTVLVVAVPEGLPL) form a helical membrane-spanning segment. Topologically, residues 462-875 (AVTISLAYSV…MWGRNVYDSI (414 aa)) are cytoplasmic. Asp499 (4-aspartylphosphate intermediate) is an active-site residue. Asp820 and Asp824 together coordinate Mg(2+). Residues 876–895 (SKFLQFQLTVNVVAVIVAFT) form a helical membrane-spanning segment. Topologically, residues 896–905 (GACITQDSPL) are extracellular. A helical membrane pass occupies residues 906–926 (KAVQMLWVNLIMDTFASLALA). The Cytoplasmic portion of the chain corresponds to 927–946 (TEPPTETLLLRKPYGRNKPL). The chain crosses the membrane as a helical span at residues 947–969 (ISRTMMKNILGHAVYQLTLIFTL). Over 970-987 (LFVGEKMFQIDSGRNAPL) the chain is Extracellular. The helical transmembrane segment at 988-1009 (HSPPSEHYTIIFNTFVMMQLFN) threads the bilayer. Topologically, residues 1010–1028 (EINARKIHGERNVFDGIFR) are cytoplasmic. A helical transmembrane segment spans residues 1029-1050 (NPIFCTIVLGTFAIQIVIVQFG). At 1051-1060 (GKPFSCSPLQ) the chain is on the extracellular side. The chain crosses the membrane as a helical span at residues 1061–1082 (LDQWMWCIFIGLGELVWGQVIA). At 1083 to 1243 (TIPTSRLKFL…SPIHSLETSL (161 aa)) the chain is on the cytoplasmic side. Glu1107, Ile1116, Asp1117, Arg1121, Trp1130, Phe1131, and Gln1138 each carry phosphoserine. Residues 1123–1140 (LRRGQILWFRGLNRIQTQ) form a calmodulin-binding subdomain A region. Position 1139 is a phosphothreonine; by PKC (Thr1139). The calmodulin-binding subdomain B stretch occupies residues 1141 to 1150 (IRVVKAFRSS). 8 positions are modified to phosphoserine: Val1144, Phe1147, Arg1148, Tyr1152, Arg1161, Thr1162, Ile1175, and Ser1178. Position 1188 is a phosphothreonine (Thr1188). Residues 1194 to 1243 (AALKQNSSPPSSLNKNNSAIDSGINLTTDTSKSATSSSPGSPIHSLETSL) form a disordered region. Composition is skewed to low complexity over residues 1196 to 1211 (LKQN…KNNS) and 1220 to 1234 (TTDT…SPGS). Ser1201 is modified (phosphoserine; by PKA). A Phosphoserine modification is found at Ser1211.

Belongs to the cation transport ATPase (P-type) (TC 3.A.3) family. Type IIB subfamily. Interacts with PDZD11. As to expression, isoforms containing segment B are found in brain, uterus, liver and kidney and in low levels in other tissues. Isoforms containing segment W are found in kidney, uterus, and pancreas. Isoforms containing segment Y are found in pancreas and in low levels in brain and heart. Isoforms containing segment Z are found in brain and heart and isoforms containing segment X are found in low levels in brain. Isoforms containing segment A are found in low levels in heart and small intestine while isoforms containing segment C are found in testis and in low levels in other tissues.

The protein localises to the cell membrane. Its subcellular location is the synapse. It is found in the apical cell membrane. It localises to the basolateral cell membrane. The catalysed reaction is Ca(2+)(in) + ATP + H2O = Ca(2+)(out) + ADP + phosphate + H(+). In terms of biological role, ATP-driven Ca(2+) ion pump involved in the maintenance of basal intracellular Ca(2+) levels in specialized cells of cerebellar circuit and vestibular and cochlear systems. Uses ATP as an energy source to transport cytosolic Ca(2+) ions across the plasma membrane to the extracellular compartment. Has fast activation and Ca(2+) clearance rate suited to control fast neuronal Ca(2+) dynamics. At parallel fiber to Purkinje neuron synapse, mediates presynaptic Ca(2+) efflux in response to climbing fiber-induced Ca(2+) rise. Provides for fast return of Ca(2+) concentrations back to their resting levels, ultimately contributing to long-term depression induction and motor learning. Plays an essential role in hearing and balance. In cochlear hair cells, shuttles Ca(2+) ions from stereocilia to the endolymph and dissipates Ca(2+) transients generated by the opening of the mechanoelectrical transduction channels. Regulates Ca(2+) levels in the vestibular system, where it contributes to the formation of otoconia. In non-excitable cells, regulates Ca(2+) signaling through spatial control of Ca(2+) ions extrusion and dissipation of Ca(2+) transients generated by store-operated channels. In lactating mammary gland, allows for the high content of Ca(2+) ions in the milk. In Rattus norvegicus (Rat), this protein is Plasma membrane calcium-transporting ATPase 2 (Atp2b2).